The chain runs to 502 residues: Ubiquilin (502 aa).

The 76-residue stretch at 8 to 83 (IKVHVKSPSN…VHLVIRNQAR (76 aa)) folds into the Ubiquitin-like domain. Low complexity predominate over residues 84 to 115 (PTPAPAAATPTASSAPSSNPTPSSQPNPTNNP). Positions 84–136 (PTPAPAAATPTASSAPSSNPTPSSQPNPTNNPFAAMGGMGSPADILNNPDAMR) are disordered. 2 STI1 domains span residues 124-157 (SPADILNNPDAMRSVMDNPITQQLLGNPEFMRTI) and 161-200 (NPQFQALIERNPEVGHILNDPNVMRQTMEMIRNPNMFQEM). Over residues 235–251 (SATNSLSGNPFASLRGD) the composition is skewed to polar residues. Positions 235–294 (SATNSLSGNPFASLRGDQSSEPRVDRAGQENNEALPNPWASNANQATNNQSNNRSADFNS) are disordered. A compositionally biased stretch (basic and acidic residues) spans 252 to 262 (QSSEPRVDRAG). Residues 274–290 (ASNANQATNNQSNNRSA) are compositionally biased toward low complexity. STI1 domains follow at residues 289-327 (SADFNSLLDSPGISSLMEQMMSNPSMQASMFSPEVINSI) and 351-387 (NPQISEGIRRSFPQMLNMMSDPSVMEAMRNPRVSEAF). The UBA domain maps to 455 to 501 (PVNPEQTYASQLEQLQSMGFSDRARNVAALTATFGDLNAAVERLLNS).

Expressed in the pharynx, hypodermis, intestine and head neurons. Upon ER stress, expressed predominantly in pharyngeal muscle, hypodermis and intestine.

Its function is as follows. May play a role in the ER-associated protein degradation pathway (ERAD) possibly via its interaction with ER-localized proteins ubxn-4 and cdc-48.1 and/or cdc48.2, providing a link between the polyubiquitinated ERAD substrates and the proteasome. Also plays an important role in the regulation of other protein degradation mechanisms and pathways including ubiquitin-proteasome system (UPS) and autophagy. Mediates the proteasomal targeting of misfolded or accumulated proteins for degradation by binding (via UBA domain) to their polyubiquitin chains and by interacting (via ubiquitin-like domain) with the subunits of the proteasome. Collaborates with POST (F36D4.5) in the export of ubiquitinated proteins from the nucleus to the cytoplasm. Also acts as a regulator of DNA repair by inhibiting homologous recombination repair, thereby redirecting double-strand break repair toward non-homologous end joining (NHEJ). This Caenorhabditis elegans protein is Ubiquilin.